Reading from the N-terminus, the 558-residue chain is Zinc finger protein piragua (558 aa).

In terms of domain architecture, ZAD spans 15 to 94 (STCRLCHHNT…QEREQSLQEQ (80 aa)). Zn(2+) contacts are provided by cysteine 17, cysteine 20, cysteine 67, and cysteine 70. A compositionally biased stretch (acidic residues) spans 132-177 (LAESSEEEFALGSDGEYENYDDDDEEEEEDYDEEDEEDGQNGEDVD). Residues 132 to 178 (LAESSEEEFALGSDGEYENYDDDDEEEEEDYDEEDEEDGQNGEDVDM) are disordered. 9 consecutive C2H2-type zinc fingers follow at residues 208–231 (FLCQ…LAAH), 237–260 (YCCN…KTLH), 266–288 (YVCA…TIVH), 294–316 (FTCN…MRIH), 322–344 (FVCQ…TRSH), 350–372 (FQCG…QQVH), 414–436 (YHCD…QALH), 441–464 (FACK…LEAH), and 468–490 (FTCG…LKVH).

Its function is as follows. May be involved in transcriptional regulation. The function of this protein is unclear. According to one report, it is required for development and viability since mutants display defects in several developmental morphogenetic processes including dorsal closure and head involution, and die by the first instar larval stage. It may also be involved in fwe-mediated cellular competition. However, according to another report, it is not required for development or viability since mutants have no visible phenotype and are fertile. The chain is Zinc finger protein piragua from Drosophila melanogaster (Fruit fly).